Consider the following 517-residue polypeptide: ATP synthase subunit alpha 1 (517 aa).

176-183 is an ATP binding site; sequence GDRQTGKT.

It belongs to the ATPase alpha/beta chains family. As to quaternary structure, F-type ATPases have 2 components, CF(1) - the catalytic core - and CF(0) - the membrane proton channel. CF(1) has five subunits: alpha(3), beta(3), gamma(1), delta(1), epsilon(1). CF(0) has three main subunits: a(1), b(2) and c(9-12). The alpha and beta chains form an alternating ring which encloses part of the gamma chain. CF(1) is attached to CF(0) by a central stalk formed by the gamma and epsilon chains, while a peripheral stalk is formed by the delta and b chains.

Its subcellular location is the cell inner membrane. It catalyses the reaction ATP + H2O + 4 H(+)(in) = ADP + phosphate + 5 H(+)(out). In terms of biological role, produces ATP from ADP in the presence of a proton gradient across the membrane. The alpha chain is a regulatory subunit. The chain is ATP synthase subunit alpha 1 from Shewanella frigidimarina (strain NCIMB 400).